We begin with the raw amino-acid sequence, 347 residues long: Probable dual-specificity RNA methyltransferase RlmN (347 aa).

Glu-91 serves as the catalytic Proton acceptor. One can recognise a Radical SAM core domain in the interval 97–327 (YKYGNSICVS…ATVRREMGSD (231 aa)). A disulfide bridge links Cys-104 with Cys-332. [4Fe-4S] cluster is bound by residues Cys-111, Cys-115, and Cys-118. S-adenosyl-L-methionine contacts are provided by residues 158 to 159 (GE), Ser-190, 213 to 215 (SLH), and Asn-289. The active-site S-methylcysteine intermediate is Cys-332.

The protein belongs to the radical SAM superfamily. RlmN family. [4Fe-4S] cluster is required as a cofactor.

Its subcellular location is the cytoplasm. It carries out the reaction adenosine(2503) in 23S rRNA + 2 reduced [2Fe-2S]-[ferredoxin] + 2 S-adenosyl-L-methionine = 2-methyladenosine(2503) in 23S rRNA + 5'-deoxyadenosine + L-methionine + 2 oxidized [2Fe-2S]-[ferredoxin] + S-adenosyl-L-homocysteine. The catalysed reaction is adenosine(37) in tRNA + 2 reduced [2Fe-2S]-[ferredoxin] + 2 S-adenosyl-L-methionine = 2-methyladenosine(37) in tRNA + 5'-deoxyadenosine + L-methionine + 2 oxidized [2Fe-2S]-[ferredoxin] + S-adenosyl-L-homocysteine. Its function is as follows. Specifically methylates position 2 of adenine 2503 in 23S rRNA and position 2 of adenine 37 in tRNAs. This is Probable dual-specificity RNA methyltransferase RlmN from Clostridium perfringens (strain SM101 / Type A).